The primary structure comprises 243 residues: Ubiquinone/menaquinone biosynthesis C-methyltransferase UbiE (243 aa).

Residues Thr69, Asp90, and 116 to 117 (DA) contribute to the S-adenosyl-L-methionine site.

This sequence belongs to the class I-like SAM-binding methyltransferase superfamily. MenG/UbiE family.

It carries out the reaction a 2-demethylmenaquinol + S-adenosyl-L-methionine = a menaquinol + S-adenosyl-L-homocysteine + H(+). It catalyses the reaction a 2-methoxy-6-(all-trans-polyprenyl)benzene-1,4-diol + S-adenosyl-L-methionine = a 5-methoxy-2-methyl-3-(all-trans-polyprenyl)benzene-1,4-diol + S-adenosyl-L-homocysteine + H(+). The protein operates within quinol/quinone metabolism; menaquinone biosynthesis; menaquinol from 1,4-dihydroxy-2-naphthoate: step 2/2. Its pathway is cofactor biosynthesis; ubiquinone biosynthesis. Functionally, methyltransferase required for the conversion of demethylmenaquinol (DMKH2) to menaquinol (MKH2) and the conversion of 2-polyprenyl-6-methoxy-1,4-benzoquinol (DDMQH2) to 2-polyprenyl-3-methyl-6-methoxy-1,4-benzoquinol (DMQH2). The chain is Ubiquinone/menaquinone biosynthesis C-methyltransferase UbiE from Ralstonia nicotianae (strain ATCC BAA-1114 / GMI1000) (Ralstonia solanacearum).